The sequence spans 117 residues: Small ribosomal subunit protein eS25 (117 aa).

A disordered region spans residues 1–34 (MPPKKDPKGGKAPPSKKKEGSGGGKAKKKKWSKG). The span at 25-34 (KAKKKKWSKG) shows a compositional bias: basic residues.

This sequence belongs to the eukaryotic ribosomal protein eS25 family.

This is Small ribosomal subunit protein eS25 (rps-25) from Caenorhabditis elegans.